The chain runs to 70 residues: Small ribosomal subunit protein bS21 (70 aa).

Belongs to the bacterial ribosomal protein bS21 family.

The sequence is that of Small ribosomal subunit protein bS21 from Polynucleobacter asymbioticus (strain DSM 18221 / CIP 109841 / QLW-P1DMWA-1) (Polynucleobacter necessarius subsp. asymbioticus).